We begin with the raw amino-acid sequence, 197 residues long: Transcription factor FapR (197 aa).

The protein belongs to the FapR family.

Transcriptional factor involved in regulation of membrane lipid biosynthesis by repressing genes involved in fatty acid and phospholipid metabolism. This is Transcription factor FapR from Bacillus mycoides (strain KBAB4) (Bacillus weihenstephanensis).